The sequence spans 847 residues: Pollen-specific leucine-rich repeat extensin-like protein 2 (847 aa).

The N-terminal stretch at 1–20 (MERPFGCFFILLLISYTVVA) is a signal peptide. LRR repeat units lie at residues 45–71 (INKV…AWKK), 106–130 (LTVV…LGLM), 131–153 (TDLA…SLSK), 155–178 (ALMY…SLSW), 179–202 (PSLK…IFDK), 204–224 (LDAI…TIGK), 226–248 (KASV…IGNM), and 249–273 (KNLN…GLLN). 2 N-linked (GlcNAc...) asparagine glycosylation sites follow: Asn-260 and Asn-274. LRR repeat units lie at residues 296–319 (LASV…KFCK) and 321–343 (PNLD…CVPG). A disordered region spans residues 381 to 847 (KDKCSGGSNG…SPPPPMFQGY (467 aa)). Positions 438–484 (PKHESPKPEEPENKHELPKQKESPKPQPSKPEDSPKPEQPKPEESPK) are enriched in basic and acidic residues. Composition is skewed to pro residues over residues 485–499 (PEQP…PVSP) and 533–642 (VPPP…PPPT). The interval 522–847 (SPPPPKVEDT…SPPPPMFQGY (326 aa)) is contains the Ser-Pro(4) repeats. Polar residues-rich tracts occupy residues 667-682 (QVPT…QILS), 688-720 (TPVQ…SPVQ), and 726-752 (QAPT…SQAP). Composition is skewed to low complexity over residues 768 to 783 (PVQS…SSPE) and 797 to 811 (NPSS…TDTS). Residues 838 to 847 (SPPPPMFQGY) show a composition bias toward pro residues.

Hydroxylated on proline residues in the S-P-P-P-P repeat. In terms of processing, O-glycosylated on hydroxyprolines. As to expression, expressed in flowers, stamen, pollen, and pollinated carpels (at protein level).

The protein resides in the secreted. It is found in the cell wall. Modulates cell morphogenesis by regulating cell wall formation and assembly, and/or growth polarization. This chain is Pollen-specific leucine-rich repeat extensin-like protein 2 (PEX2), found in Arabidopsis thaliana (Mouse-ear cress).